Here is a 45-residue protein sequence, read N- to C-terminus: Cytochrome b559 subunit beta (45 aa).

The chain crosses the membrane as a helical span at residues 20-36 (WLALHTLGVPTVFFLGA). Histidine 24 contributes to the heme binding site.

This sequence belongs to the PsbE/PsbF family. Heterodimer of an alpha subunit and a beta subunit. PSII is composed of 1 copy each of membrane proteins PsbA, PsbB, PsbC, PsbD, PsbE, PsbF, PsbH, PsbI, PsbJ, PsbK, PsbL, PsbM, PsbT, PsbX, PsbY, PsbZ, Psb30/Ycf12, peripheral proteins PsbO, CyanoQ (PsbQ), PsbU, PsbV and a large number of cofactors. It forms dimeric complexes. Heme b is required as a cofactor.

Its subcellular location is the cellular thylakoid membrane. In terms of biological role, this b-type cytochrome is tightly associated with the reaction center of photosystem II (PSII). PSII is a light-driven water:plastoquinone oxidoreductase that uses light energy to abstract electrons from H(2)O, generating O(2) and a proton gradient subsequently used for ATP formation. It consists of a core antenna complex that captures photons, and an electron transfer chain that converts photonic excitation into a charge separation. The polypeptide is Cytochrome b559 subunit beta (Parasynechococcus marenigrum (strain WH8102)).